A 1530-amino-acid polypeptide reads, in one-letter code: Brefeldin A resistance protein (1530 aa).

The span at 1–26 shows a compositional bias: polar residues; the sequence is MNQNSDTTHGQALGSTLNHTTEVTRI. The segment at 1–100 is disordered; the sequence is MNQNSDTTHG…SDDSSVDRLA (100 aa). Residue Asn-28 is glycosylated (N-linked (GlcNAc...) asparagine). Over residues 36 to 48 the composition is skewed to low complexity; the sequence is SSSNVDESLDSSN. Residues 54-64 are compositionally biased toward basic and acidic residues; sequence KASHTNEEYRS. Residue Asn-67 is glycosylated (N-linked (GlcNAc...) asparagine). Positions 72–93 are enriched in low complexity; sequence PSSSNEPSPESSSNSDSSSSDD. Residues 153–410 form the ABC transporter 1 domain; the sequence is KTFPDIFLQP…FLDMGFDCHP (258 aa). Asn-273, Asn-334, and Asn-450 each carry an N-linked (GlcNAc...) asparagine glycan. 2 positions are modified to phosphoserine: Ser-486 and Ser-489. At Thr-491 the chain carries Phosphothreonine. Helical transmembrane passes span 539–559, 575–595, 620–640, 649–669, 684–704, and 791–811; these read AYIG…GSIF, VLFF…ANMF, LIVD…VLYF, GGFW…SAFF, ALGG…IPNI, and LAII…ASET. The disordered stretch occupies residues 843-864; that stretch reads PLDLETGQDTQGGDVVKESPDN. Residues 882–1125 enclose the ABC transporter 2 domain; that stretch reads FSWRNLNYDI…LLNYFESHGA (244 aa). 918 to 925 lines the ATP pocket; sequence GESGAGKT. Asn-1159 and Asn-1175 each carry an N-linked (GlcNAc...) asparagine glycan. Phosphothreonine is present on Thr-1186. The next 6 membrane-spanning stretches (helical) occupy residues 1220–1240, 1255–1275, 1300–1320, 1338–1358, 1367–1387, and 1392–1412; these read ILMS…FTFY, AVFM…PKFI, AIIV…LCWF, YAWL…QAVA, ASVV…VLQP, and VGFW…EGLL. N-linked (GlcNAc...) asparagine glycans are attached at residues Asn-1449 and Asn-1460. Residues 1492 to 1512 form a helical membrane-spanning segment; sequence GIFVGYVFFNIFAVLLLFYVF.

It belongs to the ABC transporter superfamily. ABCG family. PDR (TC 3.A.1.205) subfamily.

The protein localises to the membrane. Confers hyper-resistance to brefeldin A (BFA), an inhibitor of intracellular protein transport. Could serve as an efflux pump of various antibiotics. The protein is Brefeldin A resistance protein (bfr1) of Schizosaccharomyces pombe (strain 972 / ATCC 24843) (Fission yeast).